Reading from the N-terminus, the 240-residue chain is 4-hydroxy-tetrahydrodipicolinate reductase (240 aa).

G7–M12 is an NAD(+) binding site. K35 provides a ligand contact to NADP(+). NAD(+)-binding positions include G74–T76 and A98–M101. H131 acts as the Proton donor/acceptor in catalysis. H132 is a (S)-2,3,4,5-tetrahydrodipicolinate binding site. The Proton donor role is filled by K135. G141–S142 is a (S)-2,3,4,5-tetrahydrodipicolinate binding site.

Belongs to the DapB family.

It localises to the cytoplasm. The catalysed reaction is (S)-2,3,4,5-tetrahydrodipicolinate + NAD(+) + H2O = (2S,4S)-4-hydroxy-2,3,4,5-tetrahydrodipicolinate + NADH + H(+). The enzyme catalyses (S)-2,3,4,5-tetrahydrodipicolinate + NADP(+) + H2O = (2S,4S)-4-hydroxy-2,3,4,5-tetrahydrodipicolinate + NADPH + H(+). Its pathway is amino-acid biosynthesis; L-lysine biosynthesis via DAP pathway; (S)-tetrahydrodipicolinate from L-aspartate: step 4/4. Catalyzes the conversion of 4-hydroxy-tetrahydrodipicolinate (HTPA) to tetrahydrodipicolinate. This is 4-hydroxy-tetrahydrodipicolinate reductase from Alkaliphilus metalliredigens (strain QYMF).